Here is a 353-residue protein sequence, read N- to C-terminus: Heat-inducible transcription repressor HrcA (353 aa).

This sequence belongs to the HrcA family.

Negative regulator of class I heat shock genes (grpE-dnaK-dnaJ and groELS operons). Prevents heat-shock induction of these operons. In Synechococcus elongatus (strain ATCC 33912 / PCC 7942 / FACHB-805) (Anacystis nidulans R2), this protein is Heat-inducible transcription repressor HrcA.